The following is a 198-amino-acid chain: Synaptobrevin homolog YKT6-A (198 aa).

One can recognise a Longin domain in the interval 8 to 127 (VLYKGENKVH…IQYNALDSYL (120 aa)). The v-SNARE coiled-coil homology domain occupies 138–198 (PMSKVQAELD…RKQNSCCDIM (61 aa)). The S-palmitoyl cysteine moiety is linked to residue C194. C195 is subject to Cysteine methyl ester. The S-farnesyl cysteine moiety is linked to residue C195. A propeptide spans 196-198 (DIM) (removed in mature form).

This sequence belongs to the synaptobrevin family. Post-translationally, palmitoylated; catalyzes its own palmitoylation. Palmitoylation is required for Golgi targeting. In terms of processing, farnesylation is required for Golgi targeting.

Its subcellular location is the cytoplasm. It localises to the cytosol. It is found in the cytoplasmic vesicle membrane. The protein resides in the golgi apparatus membrane. Functionally, vesicular soluble NSF attachment protein receptor (v-SNARE) mediating vesicle docking and fusion to a specific acceptor cellular compartment. Functions in endoplasmic reticulum to Golgi transport; as part of a SNARE complex composed of GOSR1, GOSR2 and STX5. Functions in early/recycling endosome to TGN transport; as part of a SNARE complex composed of BET1L, GOSR1 and STX5. Has a S-palmitoyl transferase activity. The protein is Synaptobrevin homolog YKT6-A (ykt6-a) of Xenopus laevis (African clawed frog).